The following is a 399-amino-acid chain: S-adenosylmethionine synthase (399 aa).

ATP is bound at residue histidine 17. Residue aspartate 19 coordinates Mg(2+). Residue glutamate 45 coordinates K(+). Residues glutamate 58 and glutamine 101 each contribute to the L-methionine site. Positions 101-111 (QSADIAMGVDQ) are flexible loop. ATP-binding positions include 177–179 (DGK), 244–245 (RF), aspartate 253, 259–260 (RK), alanine 276, and lysine 280. Position 253 (aspartate 253) interacts with L-methionine. An L-methionine-binding site is contributed by lysine 284.

It belongs to the AdoMet synthase family. In terms of assembly, homotetramer; dimer of dimers. Requires Mg(2+) as cofactor. K(+) serves as cofactor.

The protein localises to the cytoplasm. It catalyses the reaction L-methionine + ATP + H2O = S-adenosyl-L-methionine + phosphate + diphosphate. It participates in amino-acid biosynthesis; S-adenosyl-L-methionine biosynthesis; S-adenosyl-L-methionine from L-methionine: step 1/1. In terms of biological role, catalyzes the formation of S-adenosylmethionine (AdoMet) from methionine and ATP. The overall synthetic reaction is composed of two sequential steps, AdoMet formation and the subsequent tripolyphosphate hydrolysis which occurs prior to release of AdoMet from the enzyme. In Bacillus anthracis (strain A0248), this protein is S-adenosylmethionine synthase.